Reading from the N-terminus, the 397-residue chain is Ribosomal RNA large subunit methyltransferase I (397 aa).

Residues alanine 2–phenylalanine 80 form the PUA domain.

The protein belongs to the methyltransferase superfamily. RlmI family.

Its subcellular location is the cytoplasm. The enzyme catalyses cytidine(1962) in 23S rRNA + S-adenosyl-L-methionine = 5-methylcytidine(1962) in 23S rRNA + S-adenosyl-L-homocysteine + H(+). In terms of biological role, specifically methylates the cytosine at position 1962 (m5C1962) of 23S rRNA. This is Ribosomal RNA large subunit methyltransferase I from Shewanella frigidimarina (strain NCIMB 400).